A 353-amino-acid chain; its full sequence is Phosphoribosylformylglycinamidine cyclo-ligase (353 aa).

Belongs to the AIR synthase family.

Its subcellular location is the cytoplasm. It carries out the reaction 2-formamido-N(1)-(5-O-phospho-beta-D-ribosyl)acetamidine + ATP = 5-amino-1-(5-phospho-beta-D-ribosyl)imidazole + ADP + phosphate + H(+). Its pathway is purine metabolism; IMP biosynthesis via de novo pathway; 5-amino-1-(5-phospho-D-ribosyl)imidazole from N(2)-formyl-N(1)-(5-phospho-D-ribosyl)glycinamide: step 2/2. The chain is Phosphoribosylformylglycinamidine cyclo-ligase from Methylocella silvestris (strain DSM 15510 / CIP 108128 / LMG 27833 / NCIMB 13906 / BL2).